The sequence spans 377 residues: DAR GTPase 2, mitochondrial (377 aa).

Residues 1 to 21 (MATAKTWKIAREIGDAVIKAS) constitute a mitochondrion transit peptide. The 178-residue stretch at 34 to 211 (AAAVRAISER…VLDTPGIFPP (178 aa)) folds into the CP-type G domain. Residues 55–59 (DARIP) carry the DARXP motif motif. GTP is bound by residues 82–85 (NKME), 110–111 (NS), 150–155 (NVGKSA), and G207.

It belongs to the TRAFAC class YlqF/YawG GTPase family. MTG1 subfamily.

It localises to the mitochondrion. Its function is as follows. GTPase that may function in mitochondrial ribosome assembly. The polypeptide is DAR GTPase 2, mitochondrial (Arabidopsis thaliana (Mouse-ear cress)).